The primary structure comprises 439 residues: UDP-N-acetylglucosamine--peptide N-acetylglucosaminyltransferase stabilizing protein GtfB (439 aa).

It belongs to the GtfB family. As to quaternary structure, interacts with glycosyltransferase GtfA (Gtf2); probably forms a heterotetramer with 2 subunits each of GtfA and GtfB. Part of the accessory SecA2/SecY2 protein translocation apparatus.

The protein localises to the cell membrane. The protein operates within protein modification; protein glycosylation. In terms of biological role, required for the polymorphic O-glycosylation of the serine-rich repeat protein Fap1. A stabilizing protein that is part of the accessory SecA2/SecY2 system specifically required to export Fap1, a serine-rich fimbrial adhesin encoded upstream in the same operon. The GtfA-GtfB (Gtf1-Gtf2 in this bacteria) complex adds GlcNAc from UDP-GlcNAc to Fap1, attaching the first sugar residue. Cannot use not UDP-Glc as substrate. Stabilizes the glycosylation activity of GtfA, causing it to partially localize to the cellular membrane where it is more protease resistant. In Streptococcus parasanguinis, this protein is UDP-N-acetylglucosamine--peptide N-acetylglucosaminyltransferase stabilizing protein GtfB.